A 513-amino-acid polypeptide reads, in one-letter code: Probable cytosol aminopeptidase (513 aa).

Positions 275 and 280 each coordinate Mn(2+). The active site involves lysine 287. Residues aspartate 298, aspartate 357, and glutamate 359 each coordinate Mn(2+). Residue arginine 361 is part of the active site.

The protein belongs to the peptidase M17 family. The cofactor is Mn(2+).

Its subcellular location is the cytoplasm. The enzyme catalyses Release of an N-terminal amino acid, Xaa-|-Yaa-, in which Xaa is preferably Leu, but may be other amino acids including Pro although not Arg or Lys, and Yaa may be Pro. Amino acid amides and methyl esters are also readily hydrolyzed, but rates on arylamides are exceedingly low.. It carries out the reaction Release of an N-terminal amino acid, preferentially leucine, but not glutamic or aspartic acids.. Its function is as follows. Presumably involved in the processing and regular turnover of intracellular proteins. Catalyzes the removal of unsubstituted N-terminal amino acids from various peptides. The protein is Probable cytosol aminopeptidase of Streptomyces avermitilis (strain ATCC 31267 / DSM 46492 / JCM 5070 / NBRC 14893 / NCIMB 12804 / NRRL 8165 / MA-4680).